The following is a 101-amino-acid chain: MGTRYFLVGFLILLVLGFEAQGAHVPQQDEASSPALLTKMQKSLLGYWDTAKAAAHKLYKKTYLPTVDEKIRDIYSKSTAAVTTYAGIITDQVFSILSGED.

Residues 1–22 form the signal peptide; it reads MGTRYFLVGFLILLVLGFEAQG. The lipid binding stretch occupies residues 66 to 74; the sequence is TVDEKIRDI. The segment at 78–101 is lipoprotein lipase cofactor; that stretch reads STAAVTTYAGIITDQVFSILSGED.

This sequence belongs to the apolipoprotein C2 family. Post-translationally, proapolipoprotein C-II is synthesized as a sialic acid containing glycoprotein which is subsequently desialylated prior to its proteolytic processing. Proapolipoprotein C-II, the major form found in plasma undergoes proteolytic cleavage of its N-terminal hexapeptide to generate apolipoprotein C-II, which occurs as the minor form in plasma.

It localises to the secreted. In terms of biological role, component of chylomicrons, very low-density lipoproteins (VLDL), low-density lipoproteins (LDL), and high-density lipoproteins (HDL) in plasma. Plays an important role in lipoprotein metabolism as an activator of lipoprotein lipase. Both proapolipoprotein C-II and apolipoprotein C-II can activate lipoprotein lipase. The protein is Apolipoprotein C-II (APOC2) of Capra hircus aegagrus (Wild goat).